The chain runs to 261 residues: uncharacterized protein (261 aa).

3 helical membrane passes run 15 to 35 (WYSV…IIVC), 87 to 107 (VYLI…IRNA), and 131 to 151 (LLLY…YFLI). The span at 234-246 (LEEKKAKRRQNAE) shows a compositional bias: basic and acidic residues. Positions 234-261 (LEEKKAKRRQNAERRKKRREIAMEQREQ) are disordered.

The protein localises to the membrane. This is an uncharacterized protein from Caenorhabditis elegans.